Here is a 95-residue protein sequence, read N- to C-terminus: Large ribosomal subunit protein bL25 (95 aa).

It belongs to the bacterial ribosomal protein bL25 family. As to quaternary structure, part of the 50S ribosomal subunit; part of the 5S rRNA/L5/L18/L25 subcomplex. Contacts the 5S rRNA. Binds to the 5S rRNA independently of L5 and L18.

In terms of biological role, this is one of the proteins that binds to the 5S RNA in the ribosome where it forms part of the central protuberance. The protein is Large ribosomal subunit protein bL25 of Shewanella halifaxensis (strain HAW-EB4).